The chain runs to 347 residues: UDP-3-O-acylglucosamine N-acyltransferase (347 aa).

His241 acts as the Proton acceptor in catalysis.

It belongs to the transferase hexapeptide repeat family. LpxD subfamily. As to quaternary structure, homotrimer.

It carries out the reaction a UDP-3-O-[(3R)-3-hydroxyacyl]-alpha-D-glucosamine + a (3R)-hydroxyacyl-[ACP] = a UDP-2-N,3-O-bis[(3R)-3-hydroxyacyl]-alpha-D-glucosamine + holo-[ACP] + H(+). Its pathway is bacterial outer membrane biogenesis; LPS lipid A biosynthesis. In terms of biological role, catalyzes the N-acylation of UDP-3-O-acylglucosamine using 3-hydroxyacyl-ACP as the acyl donor. Is involved in the biosynthesis of lipid A, a phosphorylated glycolipid that anchors the lipopolysaccharide to the outer membrane of the cell. The protein is UDP-3-O-acylglucosamine N-acyltransferase of Nitrosococcus oceani (strain ATCC 19707 / BCRC 17464 / JCM 30415 / NCIMB 11848 / C-107).